A 418-amino-acid polypeptide reads, in one-letter code: Tryptophan synthase beta chain (418 aa).

Over residues 1-18 (MTSTLPNASTPDPASLQP) the composition is skewed to polar residues. Residues 1–23 (MTSTLPNASTPDPASLQPSVRPG) form a disordered region. Lys111 bears the N6-(pyridoxal phosphate)lysine mark.

The protein belongs to the TrpB family. Tetramer of two alpha and two beta chains. The cofactor is pyridoxal 5'-phosphate.

It catalyses the reaction (1S,2R)-1-C-(indol-3-yl)glycerol 3-phosphate + L-serine = D-glyceraldehyde 3-phosphate + L-tryptophan + H2O. It functions in the pathway amino-acid biosynthesis; L-tryptophan biosynthesis; L-tryptophan from chorismate: step 5/5. Its function is as follows. The beta subunit is responsible for the synthesis of L-tryptophan from indole and L-serine. The sequence is that of Tryptophan synthase beta chain from Parasynechococcus marenigrum (strain WH8102).